The chain runs to 554 residues: (E)-beta-caryophyllene synthase (554 aa).

The Mn(2+) site is built by aspartate 313 and aspartate 317. A DDXXD motif motif is present at residues 313–317 (DDTYD). 2 homodimerization regions span residues 319–325 (YGTLDEL) and 391–427 (EAQWFFSKYKPTMQEYMKVALLSSGYMMMTINSLAVI). Aspartate 457 and glutamate 465 together coordinate Mn(2+).

It belongs to the terpene synthase family. In terms of assembly, homodimer. Mn(2+) is required as a cofactor. Requires Mg(2+) as cofactor. As to expression, expressed in peltate glandular trichomes. Present at low levels in flowers, leaves and stems.

It catalyses the reaction (2E,6E)-farnesyl diphosphate = (-)-(E)-beta-caryophyllene + diphosphate. The catalysed reaction is (2E,6E)-farnesyl diphosphate = alpha-humulene + diphosphate. The protein operates within secondary metabolite biosynthesis; terpenoid biosynthesis. In terms of biological role, involved in the biosynthesis of phenolic sesquiterpenes natural products. Sesquiterpene synthase converting (2E,6E)-farnesyl diphosphate (FPP) to (E)-beta-caryophyllene and alpha-humulene. The protein is (E)-beta-caryophyllene synthase of Origanum vulgare (Wild marjoram).